We begin with the raw amino-acid sequence, 207 residues long: Outer-membrane lipoprotein LolB (207 aa).

Residues 1–21 (MTLPDFRLIRLLPLASLVLTA) form the signal peptide. C22 carries N-palmitoyl cysteine lipidation. The S-diacylglycerol cysteine moiety is linked to residue C22.

The protein belongs to the LolB family. As to quaternary structure, monomer.

The protein resides in the cell outer membrane. Plays a critical role in the incorporation of lipoproteins in the outer membrane after they are released by the LolA protein. In Salmonella schwarzengrund (strain CVM19633), this protein is Outer-membrane lipoprotein LolB.